The following is a 300-amino-acid chain: N-acetylmuramic acid 6-phosphate etherase 1 (300 aa).

One can recognise an SIS domain in the interval 59 to 222; that stretch reads AAERFKKGGR…STGIMVKVGN (164 aa). Glu87 (proton donor) is an active-site residue. Residue Glu118 is part of the active site.

This sequence belongs to the GCKR-like family. MurNAc-6-P etherase subfamily. In terms of assembly, homodimer.

It carries out the reaction N-acetyl-D-muramate 6-phosphate + H2O = N-acetyl-D-glucosamine 6-phosphate + (R)-lactate. It functions in the pathway amino-sugar metabolism; N-acetylmuramate degradation. Specifically catalyzes the cleavage of the D-lactyl ether substituent of MurNAc 6-phosphate, producing GlcNAc 6-phosphate and D-lactate. The polypeptide is N-acetylmuramic acid 6-phosphate etherase 1 (Enterococcus faecalis (strain ATCC 700802 / V583)).